The following is a 92-amino-acid chain: Ribonuclease P protein component 1 (92 aa).

Belongs to the eukaryotic/archaeal RNase P protein component 1 family. In terms of assembly, consists of a catalytic RNA component and at least 4-5 protein subunits.

Its subcellular location is the cytoplasm. It catalyses the reaction Endonucleolytic cleavage of RNA, removing 5'-extranucleotides from tRNA precursor.. In terms of biological role, part of ribonuclease P, a protein complex that generates mature tRNA molecules by cleaving their 5'-ends. The polypeptide is Ribonuclease P protein component 1 (Staphylothermus marinus (strain ATCC 43588 / DSM 3639 / JCM 9404 / F1)).